The primary structure comprises 216 residues: LexA repressor (216 aa).

Positions 29–49 (RAEIAQALGFRSPNAAEDHLK) form a DNA-binding region, H-T-H motif. Active-site for autocatalytic cleavage activity residues include Ser-134 and Lys-171.

This sequence belongs to the peptidase S24 family. As to quaternary structure, homodimer.

The catalysed reaction is Hydrolysis of Ala-|-Gly bond in repressor LexA.. Functionally, represses a number of genes involved in the response to DNA damage (SOS response), including recA and lexA. In the presence of single-stranded DNA, RecA interacts with LexA causing an autocatalytic cleavage which disrupts the DNA-binding part of LexA, leading to derepression of the SOS regulon and eventually DNA repair. This chain is LexA repressor, found in Bordetella parapertussis (strain 12822 / ATCC BAA-587 / NCTC 13253).